Consider the following 208-residue polypeptide: GTP cyclohydrolase-2 (208 aa).

Position 49–53 (49–53 (RLHSE)) interacts with GTP. Zn(2+) contacts are provided by Cys54, Cys65, and Cys67. Residues Gln70, 92 to 94 (EGR), and Thr114 contribute to the GTP site. Catalysis depends on Asp126, which acts as the Proton acceptor. Arg128 acts as the Nucleophile in catalysis. GTP-binding residues include Thr149 and Lys154.

This sequence belongs to the GTP cyclohydrolase II family. Zn(2+) serves as cofactor.

The enzyme catalyses GTP + 4 H2O = 2,5-diamino-6-hydroxy-4-(5-phosphoribosylamino)-pyrimidine + formate + 2 phosphate + 3 H(+). It participates in cofactor biosynthesis; riboflavin biosynthesis; 5-amino-6-(D-ribitylamino)uracil from GTP: step 1/4. Catalyzes the conversion of GTP to 2,5-diamino-6-ribosylamino-4(3H)-pyrimidinone 5'-phosphate (DARP), formate and pyrophosphate. The protein is GTP cyclohydrolase-2 of Azotobacter vinelandii (strain DJ / ATCC BAA-1303).